We begin with the raw amino-acid sequence, 246 residues long: Large ribosomal subunit protein uL30-like 1 (246 aa).

The residue at position 54 (Ser54) is a Phosphoserine.

It belongs to the universal ribosomal protein uL30 family.

This chain is Large ribosomal subunit protein uL30-like 1 (RPL7L1), found in Pongo abelii (Sumatran orangutan).